Here is a 277-residue protein sequence, read N- to C-terminus: 3-methyl-2-oxobutanoate hydroxymethyltransferase (277 aa).

Positions 53 and 96 each coordinate Mg(2+). Residues 53–54 (DS), Asp96, and Lys126 each bind 3-methyl-2-oxobutanoate. Residue Glu128 coordinates Mg(2+). Residue Glu195 is the Proton acceptor of the active site.

It belongs to the PanB family. In terms of assembly, homodecamer; pentamer of dimers. Requires Mg(2+) as cofactor.

The protein resides in the cytoplasm. The catalysed reaction is 3-methyl-2-oxobutanoate + (6R)-5,10-methylene-5,6,7,8-tetrahydrofolate + H2O = 2-dehydropantoate + (6S)-5,6,7,8-tetrahydrofolate. Its pathway is cofactor biosynthesis; (R)-pantothenate biosynthesis; (R)-pantoate from 3-methyl-2-oxobutanoate: step 1/2. Functionally, catalyzes the reversible reaction in which hydroxymethyl group from 5,10-methylenetetrahydrofolate is transferred onto alpha-ketoisovalerate to form ketopantoate. The protein is 3-methyl-2-oxobutanoate hydroxymethyltransferase of Prosthecochloris aestuarii (strain DSM 271 / SK 413).